The primary structure comprises 124 residues: S-phase delaying protein 1 (124 aa).

Positions 1–31 (MHSSKRVMTTKTHVEQPESSMRPQLPESIQG) are enriched in polar residues. The segment at 1 to 32 (MHSSKRVMTTKTHVEQPESSMRPQLPESIQGS) is disordered.

The protein belongs to the DIF1/spd1 family. As to quaternary structure, interacts with cdc22. In terms of processing, ubiquitinated by the DCX(DTL) complex, also named CRL4(CDT2) complex, leading to its degradation.

The protein resides in the cytoplasm. It localises to the nucleus. Functionally, regulates the ribonucleotide reductase activity through its mediation of the nuclear localization of suc22, the small subunit of the ribonucleotide reductase. Delays the progression of the G1-S phase transition, thereby ensuring the G1 phase is complete. Interacts with both p34 and the p34-p56 complex, although no direct inhibitory effect on the bound proteins has been demonstrated. The action of p14 may happen coincidentally with the cdc10 function or may happen downstream of this. The chain is S-phase delaying protein 1 (spd1) from Schizosaccharomyces pombe (strain 972 / ATCC 24843) (Fission yeast).